Reading from the N-terminus, the 401-residue chain is Enolase (401 aa).

Gln154 contributes to the (2R)-2-phosphoglycerate binding site. Glu197 (proton donor) is an active-site residue. Positions 233, 274, and 301 each coordinate Mg(2+). (2R)-2-phosphoglycerate-binding residues include Lys326, Arg355, Ser356, and Lys377. The Proton acceptor role is filled by Lys326.

Belongs to the enolase family. Requires Mg(2+) as cofactor.

It is found in the cytoplasm. The protein resides in the secreted. Its subcellular location is the cell surface. The catalysed reaction is (2R)-2-phosphoglycerate = phosphoenolpyruvate + H2O. It functions in the pathway carbohydrate degradation; glycolysis; pyruvate from D-glyceraldehyde 3-phosphate: step 4/5. Its function is as follows. Catalyzes the reversible conversion of 2-phosphoglycerate (2-PG) into phosphoenolpyruvate (PEP). It is essential for the degradation of carbohydrates via glycolysis. The sequence is that of Enolase from Thermoplasma acidophilum (strain ATCC 25905 / DSM 1728 / JCM 9062 / NBRC 15155 / AMRC-C165).